The primary structure comprises 337 residues: DNA-directed RNA polymerase subunit alpha (337 aa).

Residues Met1 to Thr231 form an alpha N-terminal domain (alpha-NTD) region. Positions Glu247–Gly337 are alpha C-terminal domain (alpha-CTD).

Belongs to the RNA polymerase alpha chain family. Homodimer. The RNAP catalytic core consists of 2 alpha, 1 beta, 1 beta' and 1 omega subunit. When a sigma factor is associated with the core the holoenzyme is formed, which can initiate transcription.

It carries out the reaction RNA(n) + a ribonucleoside 5'-triphosphate = RNA(n+1) + diphosphate. In terms of biological role, DNA-dependent RNA polymerase catalyzes the transcription of DNA into RNA using the four ribonucleoside triphosphates as substrates. This chain is DNA-directed RNA polymerase subunit alpha, found in Campylobacter jejuni subsp. jejuni serotype O:2 (strain ATCC 700819 / NCTC 11168).